The following is a 290-amino-acid chain: Acetyl-coenzyme A carboxylase carboxyl transferase subunit beta (290 aa).

A CoA carboxyltransferase N-terminal domain is found at 27–290; the sequence is LWHKCPSCEA…FTHSPSPVSA (264 aa). Zn(2+) contacts are provided by Cys31, Cys34, Cys50, and Cys53. The C4-type zinc-finger motif lies at 31–53; that stretch reads CPSCEAVLYRPELEKTLDVCPKC.

The protein belongs to the AccD/PCCB family. As to quaternary structure, acetyl-CoA carboxylase is a heterohexamer composed of biotin carboxyl carrier protein (AccB), biotin carboxylase (AccC) and two subunits each of ACCase subunit alpha (AccA) and ACCase subunit beta (AccD). The cofactor is Zn(2+).

It localises to the cytoplasm. It carries out the reaction N(6)-carboxybiotinyl-L-lysyl-[protein] + acetyl-CoA = N(6)-biotinyl-L-lysyl-[protein] + malonyl-CoA. It participates in lipid metabolism; malonyl-CoA biosynthesis; malonyl-CoA from acetyl-CoA: step 1/1. In terms of biological role, component of the acetyl coenzyme A carboxylase (ACC) complex. Biotin carboxylase (BC) catalyzes the carboxylation of biotin on its carrier protein (BCCP) and then the CO(2) group is transferred by the transcarboxylase to acetyl-CoA to form malonyl-CoA. In Pseudomonas paraeruginosa (strain DSM 24068 / PA7) (Pseudomonas aeruginosa (strain PA7)), this protein is Acetyl-coenzyme A carboxylase carboxyl transferase subunit beta.